A 222-amino-acid chain; its full sequence is tRNA (guanine-N(1)-)-methyltransferase (222 aa).

S-adenosyl-L-methionine-binding positions include G112 and 132–137; that span reads IGDYVL.

It belongs to the RNA methyltransferase TrmD family. In terms of assembly, homodimer.

It localises to the cytoplasm. The catalysed reaction is guanosine(37) in tRNA + S-adenosyl-L-methionine = N(1)-methylguanosine(37) in tRNA + S-adenosyl-L-homocysteine + H(+). In terms of biological role, specifically methylates guanosine-37 in various tRNAs. The sequence is that of tRNA (guanine-N(1)-)-methyltransferase from Azobacteroides pseudotrichonymphae genomovar. CFP2.